The sequence spans 134 residues: Acyl carrier protein, mitochondrial (134 aa).

A mitochondrion-targeting transit peptide spans 1 to 46; that stretch reads MFRTAALTAARVARPAVASAVRAGVARPAFVQAVPKVAAFQAVRFY. One can recognise a Carrier domain in the interval 55–131; it reads DEVFSRIAQV…KAVEYILSQP (77 aa). Residue Ser91 is modified to O-(pantetheine 4'-phosphoryl)serine.

It belongs to the acyl carrier protein (ACP) family. As to quaternary structure, complex I is composed of about 30 different subunits. Post-translationally, 4'-phosphopantetheine is transferred from CoA to a specific serine of apo-ACP by acpS. This modification is essential for activity because fatty acids are bound in thioester linkage to the sulfhydryl of the prosthetic group.

The protein localises to the mitochondrion. Its pathway is lipid metabolism; fatty acid biosynthesis. Carrier of the growing fatty acid chain in fatty acid biosynthesis. May be involved in the synthesis of very-long-chain fatty acids. Accessory and non-catalytic subunit of the mitochondrial membrane respiratory chain NADH dehydrogenase (Complex I), which functions in the transfer of electrons from NADH to the respiratory chain. The polypeptide is Acyl carrier protein, mitochondrial (nuo-12) (Neurospora crassa (strain ATCC 24698 / 74-OR23-1A / CBS 708.71 / DSM 1257 / FGSC 987)).